The chain runs to 63 residues: Large ribosomal subunit protein uL29 (63 aa).

This sequence belongs to the universal ribosomal protein uL29 family.

The polypeptide is Large ribosomal subunit protein uL29 (Salmonella agona (strain SL483)).